The primary structure comprises 257 residues: NH(3)-dependent NAD(+) synthetase (257 aa).

40–47 (GISGGIDS) serves as a coordination point for ATP. D46 serves as a coordination point for Mg(2+). A deamido-NAD(+)-binding site is contributed by R121. T141 is an ATP binding site. A Mg(2+)-binding site is contributed by E146. 2 residues coordinate deamido-NAD(+): K154 and D161. The ATP site is built by K170 and S192. Position 238–239 (238–239 (HK)) interacts with deamido-NAD(+).

It belongs to the NAD synthetase family. Homodimer.

The catalysed reaction is deamido-NAD(+) + NH4(+) + ATP = AMP + diphosphate + NAD(+) + H(+). It participates in cofactor biosynthesis; NAD(+) biosynthesis; NAD(+) from deamido-NAD(+) (ammonia route): step 1/1. Its function is as follows. Catalyzes the ATP-dependent amidation of deamido-NAD to form NAD. Uses ammonia as a nitrogen source. The sequence is that of NH(3)-dependent NAD(+) synthetase from Mycoplasmopsis pulmonis (strain UAB CTIP) (Mycoplasma pulmonis).